A 375-amino-acid polypeptide reads, in one-letter code: Elongation factor Tu (375 aa).

In terms of domain architecture, tr-type G spans 10-205 (KPHINVGAIG…TMDKYFVIPE (196 aa)). A G1 region spans residues 19–26 (GHVDHGKT). GTP is bound at residue 19–26 (GHVDHGKT). A Mg(2+)-binding site is contributed by threonine 26. Residues 60–64 (GITIN) form a G2 region. A G3 region spans residues 81-84 (DCPG). Residues 81-85 (DCPGH) and 136-139 (NKMD) contribute to the GTP site. The G4 stretch occupies residues 136-139 (NKMD). Positions 173–175 (SAF) are G5.

Belongs to the TRAFAC class translation factor GTPase superfamily. Classic translation factor GTPase family. EF-Tu/EF-1A subfamily. In terms of assembly, monomer.

The protein resides in the cytoplasm. It carries out the reaction GTP + H2O = GDP + phosphate + H(+). GTP hydrolase that promotes the GTP-dependent binding of aminoacyl-tRNA to the A-site of ribosomes during protein biosynthesis. This is Elongation factor Tu (tuf) from Spirochaeta aurantia.